Here is a 305-residue protein sequence, read N- to C-terminus: Protein hrde-2 (305 aa).

2 disordered regions span residues 211-233 (AEMV…PVPA) and 267-305 (EMSN…EYCQ). A compositionally biased stretch (polar residues) spans 215-227 (PSNTTGSSGSPMS). A compositionally biased stretch (acidic residues) spans 268–287 (MSNDEYSPDESENDENEYDY). The segment covering 289–305 (NAARYDDGYDEGHEYCQ) has biased composition (basic and acidic residues).

Expressed throughout the male and female germline.

The protein localises to the nucleus. Plays a role in germline RNA interference (RNAi), and in particular is required for piwi-interacting RNA (piRNA) gene silencing. Facilitates the binding of the argonaut protein hrde-1 to small interfering RNAs (siRNAs) targets that are required for transgenerational epigenetic inheritance and germline immortality. The polypeptide is Protein hrde-2 (Caenorhabditis elegans).